Here is a 510-residue protein sequence, read N- to C-terminus: NAD(P)H-quinone oxidoreductase subunit 2 A, chloroplastic (510 aa).

Transmembrane regions (helical) follow at residues 24–44 (LLLF…GLIL), 59–79 (WFYF…LFRW), 99–119 (IFQF…VEYI), 124–144 (MAIT…MFLC), 149–169 (LITL…LSGY), 183–203 (YLLM…WLYG), 229–249 (ISIA…PAPF), 295–315 (WHLL…LIAI), 323–343 (MLAY…IVGD), 354–374 (YMLF…SFGL), 395–415 (ALSL…AGFF), and 418–438 (LHLF…IGLL).

This sequence belongs to the complex I subunit 2 family. NDH is composed of at least 16 different subunits, 5 of which are encoded in the nucleus.

The protein localises to the plastid. It localises to the chloroplast thylakoid membrane. The catalysed reaction is a plastoquinone + NADH + (n+1) H(+)(in) = a plastoquinol + NAD(+) + n H(+)(out). The enzyme catalyses a plastoquinone + NADPH + (n+1) H(+)(in) = a plastoquinol + NADP(+) + n H(+)(out). NDH shuttles electrons from NAD(P)H:plastoquinone, via FMN and iron-sulfur (Fe-S) centers, to quinones in the photosynthetic chain and possibly in a chloroplast respiratory chain. The immediate electron acceptor for the enzyme in this species is believed to be plastoquinone. Couples the redox reaction to proton translocation, and thus conserves the redox energy in a proton gradient. This chain is NAD(P)H-quinone oxidoreductase subunit 2 A, chloroplastic, found in Dioscorea elephantipes (Elephant's foot yam).